The following is a 317-amino-acid chain: Ribosomal protein L11 methyltransferase (317 aa).

Positions 158, 179, 201, and 244 each coordinate S-adenosyl-L-methionine.

Belongs to the methyltransferase superfamily. PrmA family.

The protein localises to the cytoplasm. It catalyses the reaction L-lysyl-[protein] + 3 S-adenosyl-L-methionine = N(6),N(6),N(6)-trimethyl-L-lysyl-[protein] + 3 S-adenosyl-L-homocysteine + 3 H(+). Functionally, methylates ribosomal protein L11. The polypeptide is Ribosomal protein L11 methyltransferase (Lactococcus lactis subsp. cremoris (strain MG1363)).